A 275-amino-acid chain; its full sequence is Large ribosomal subunit protein uL2 (275 aa).

Residues V221–K275 are disordered.

The protein belongs to the universal ribosomal protein uL2 family. Part of the 50S ribosomal subunit. Forms a bridge to the 30S subunit in the 70S ribosome.

In terms of biological role, one of the primary rRNA binding proteins. Required for association of the 30S and 50S subunits to form the 70S ribosome, for tRNA binding and peptide bond formation. It has been suggested to have peptidyltransferase activity; this is somewhat controversial. Makes several contacts with the 16S rRNA in the 70S ribosome. The sequence is that of Large ribosomal subunit protein uL2 from Desulfosudis oleivorans (strain DSM 6200 / JCM 39069 / Hxd3) (Desulfococcus oleovorans).